Reading from the N-terminus, the 417-residue chain is Senescence-associated protein AAF, chloroplastic (417 aa).

The transit peptide at 1-36 directs the protein to the chloroplast; it reads MALNVSKVVPNSPILVKSVNASRSRRVLLAYVHHPL.

The protein belongs to the ATA15/OSA15 family. As to expression, expressed in leaves. Expressed in 7-day-old seedlings, roots, rosette leaves, cauline leaves and flower buds.

The protein resides in the plastid. The protein localises to the chloroplast. In terms of biological role, involved in modulation of redox homeostasis to regulate leaf senescence mediated by age and stress factors during plant development. Its function is dependent of EIN2, a central factor of ethylene signaling. In Arabidopsis thaliana (Mouse-ear cress), this protein is Senescence-associated protein AAF, chloroplastic.